The chain runs to 351 residues: Glycerol-1-phosphate dehydrogenase [NAD(P)+] (351 aa).

Residues 93 to 97 (GKVLD) and 115 to 118 (TTAS) contribute to the NAD(+) site. Substrate is bound at residue Asp120. Ser124 is a binding site for NAD(+). Substrate is bound at residue Asp167. Residues Asp167 and His247 each coordinate Zn(2+). A substrate-binding site is contributed by His251. Zn(2+) is bound at residue His263.

This sequence belongs to the glycerol-1-phosphate dehydrogenase family. Requires Zn(2+) as cofactor.

The protein localises to the cytoplasm. The catalysed reaction is sn-glycerol 1-phosphate + NAD(+) = dihydroxyacetone phosphate + NADH + H(+). The enzyme catalyses sn-glycerol 1-phosphate + NADP(+) = dihydroxyacetone phosphate + NADPH + H(+). Its pathway is membrane lipid metabolism; glycerophospholipid metabolism. Its function is as follows. Catalyzes the NAD(P)H-dependent reduction of dihydroxyacetonephosphate (DHAP or glycerone phosphate) to glycerol 1-phosphate (G1P). The G1P thus generated is used as the glycerophosphate backbone of phospholipids in the cellular membranes of Archaea. This chain is Glycerol-1-phosphate dehydrogenase [NAD(P)+], found in Archaeoglobus fulgidus (strain ATCC 49558 / DSM 4304 / JCM 9628 / NBRC 100126 / VC-16).